A 276-amino-acid polypeptide reads, in one-letter code: Undecaprenyl-diphosphatase 2 (276 aa).

8 helical membrane passes run 1–21 (MSLW…LFPV), 44–64 (QLLP…LWYF), 87–107 (GHLM…GLLL), 114–134 (VFHD…LLWL), 150–170 (MTFK…IPGF), 190–210 (AAEF…VLEL), 222–242 (DALL…RFLM), and 251–271 (LASF…WFML).

This sequence belongs to the UppP family.

The protein resides in the cell inner membrane. The catalysed reaction is di-trans,octa-cis-undecaprenyl diphosphate + H2O = di-trans,octa-cis-undecaprenyl phosphate + phosphate + H(+). Its function is as follows. Catalyzes the dephosphorylation of undecaprenyl diphosphate (UPP). Confers resistance to bacitracin. The sequence is that of Undecaprenyl-diphosphatase 2 from Burkholderia lata (strain ATCC 17760 / DSM 23089 / LMG 22485 / NCIMB 9086 / R18194 / 383).